We begin with the raw amino-acid sequence, 225 residues long: Doublesex- and mab-3-related transcription factor C1 (225 aa).

Basic and acidic residues predominate over residues Met-1 to Lys-12. Disordered regions lie at residues Met-1–His-49 and Gln-179–Gly-216. Basic residues predominate over residues Arg-27–Lys-37.

The protein belongs to the DMRT family.

The chain is Doublesex- and mab-3-related transcription factor C1 (Dmrtc1) from Rattus norvegicus (Rat).